The sequence spans 580 residues: External alternative NAD(P)H-ubiquinone oxidoreductase B3, mitochondrial (580 aa).

The transit peptide at 1 to 38 (MRPFAYFERLSQAFHDYPSLSKILVVSTISGGGLIVYS) directs the protein to the mitochondrion. 57–87 (KVVLLGTGWAGASFLKTLNNSSYEVQVISPR) serves as a coordination point for FAD. 221 to 257 (LHFVVVGGGPTGVEFASELHDFVNEDLVKLYPKAKNL) lines the NAD(+) pocket. An EF-hand domain is found at 377-412 (KVMEDIAAIFKKADKENSGTLTMKEFHEVMSDICDR). The Ca(2+) site is built by Asp-390, Ser-394, Thr-396, and Glu-401. Residues 571–580 (FIFGRDSSRI) carry the Microbody targeting signal motif.

This sequence belongs to the NADH dehydrogenase family. FAD is required as a cofactor. As to expression, expressed at low levels in seedlings, roots, stems, buds and flowers and, to a lower extent, in leaves and cotyledons.

The protein localises to the mitochondrion inner membrane. It is found in the peroxisome. The enzyme catalyses a quinone + NADH + H(+) = a quinol + NAD(+). The catalysed reaction is a ubiquinone + NADH + H(+) = a ubiquinol + NAD(+). Functionally, alternative NADH-ubiquinone oxidoreductase which catalyzes the oxidation of mitochondrial NADH does not translocate protons across the inner mitochondrial membrane. In Arabidopsis thaliana (Mouse-ear cress), this protein is External alternative NAD(P)H-ubiquinone oxidoreductase B3, mitochondrial (NDB3).